The primary structure comprises 166 residues: 3-hydroxyacyl-[acyl-carrier-protein] dehydratase FabZ (166 aa).

Residue His72 is part of the active site.

This sequence belongs to the thioester dehydratase family. FabZ subfamily.

Its subcellular location is the cytoplasm. The enzyme catalyses a (3R)-hydroxyacyl-[ACP] = a (2E)-enoyl-[ACP] + H2O. Its function is as follows. Involved in unsaturated fatty acids biosynthesis. Catalyzes the dehydration of short chain beta-hydroxyacyl-ACPs and long chain saturated and unsaturated beta-hydroxyacyl-ACPs. The protein is 3-hydroxyacyl-[acyl-carrier-protein] dehydratase FabZ of Synechococcus sp. (strain JA-3-3Ab) (Cyanobacteria bacterium Yellowstone A-Prime).